The primary structure comprises 604 residues: Glutamyl-tRNA(Gln) amidotransferase subunit B, mitochondrial (604 aa).

A mitochondrion-targeting transit peptide spans 1-48 (MIRQCLSRRGAYSRYRLAARGVELAEPFHHQSSRPQGRRNWSSSPRCS). The segment at 28–57 (FHHQSSRPQGRRNWSSSPRCSLDIRTDTPR) is disordered. The segment covering 33-46 (SRPQGRRNWSSSPR) has biased composition (polar residues).

Belongs to the GatB/GatE family. GatB subfamily. In terms of assembly, subunit of the heterotrimeric GatCAB amidotransferase (AdT) complex, composed of A, B and C subunits.

It localises to the mitochondrion. It carries out the reaction L-glutamyl-tRNA(Gln) + L-glutamine + ATP + H2O = L-glutaminyl-tRNA(Gln) + L-glutamate + ADP + phosphate + H(+). Its function is as follows. Allows the formation of correctly charged Gln-tRNA(Gln) through the transamidation of misacylated Glu-tRNA(Gln) in the mitochondria. The reaction takes place in the presence of glutamine and ATP through an activated gamma-phospho-Glu-tRNA(Gln). The polypeptide is Glutamyl-tRNA(Gln) amidotransferase subunit B, mitochondrial (Ajellomyces dermatitidis (strain ER-3 / ATCC MYA-2586) (Blastomyces dermatitidis)).